Reading from the N-terminus, the 168-residue chain is Phosphopantetheine adenylyltransferase (168 aa).

A substrate-binding site is contributed by threonine 13. ATP is bound by residues threonine 13–phenylalanine 14 and histidine 21. 3 residues coordinate substrate: lysine 45, leucine 78, and arginine 92. ATP is bound by residues glycine 93–arginine 95, glutamate 103, and threonine 128–serine 134.

This sequence belongs to the bacterial CoaD family. In terms of assembly, homohexamer. Requires Mg(2+) as cofactor.

It is found in the cytoplasm. The enzyme catalyses (R)-4'-phosphopantetheine + ATP + H(+) = 3'-dephospho-CoA + diphosphate. It functions in the pathway cofactor biosynthesis; coenzyme A biosynthesis; CoA from (R)-pantothenate: step 4/5. Reversibly transfers an adenylyl group from ATP to 4'-phosphopantetheine, yielding dephospho-CoA (dPCoA) and pyrophosphate. The protein is Phosphopantetheine adenylyltransferase of Wolbachia pipientis subsp. Culex pipiens (strain wPip).